Consider the following 76-residue polypeptide: uncharacterized protein (76 aa).

This is an uncharacterized protein from Homo sapiens (Human).